A 317-amino-acid chain; its full sequence is uncharacterized protein (317 aa).

At 1–13 the chain is on the cytoplasmic side; it reads MKRVTGVFLTLLR. The chain crosses the membrane as a helical span at residues 14–34; it reads FSQFASSVLVMSLLAYAIHAY. The Extracellular portion of the chain corresponds to 35–49; that stretch reads GNRGNKKTNFTLATG. Asn-43 carries an N-linked (GlcNAc...) asparagine glycan. Residues 50–70 traverse the membrane as a helical segment; sequence VISVFYLIALGILCLALPTLI. A topological domain (cytoplasmic) is located at residue Tyr-71. The helical transmembrane segment at 72-92 threads the bilayer; the sequence is IGMYFCAELIVCMLWLAAFVV. At 93-133 the chain is on the extracellular side; it reads LAKAQGERSCSNTNADGLYYNPYSGQYTADSHRRACNSSQA. N-linked (GlcNAc...) asparagine glycosylation occurs at Asn-129. The chain crosses the membrane as a helical span at residues 134–154; the sequence is AIAFSGLCFVLFLISVILLGI. Residues 155–317 are Cytoplasmic-facing; the sequence is NVLTPIRKRY…EPNRNVNQMP (163 aa). The segment at 204-317 is disordered; sequence RTGDVEAGAG…EPNRNVNQMP (114 aa). Residues 239–250 show a composition bias toward low complexity; sequence TTTTNTRYTTTT. Positions 256–282 are enriched in polar residues; sequence RYTTNDRNPGSANVANSAVDQHAYSTD. The segment covering 284–295 has biased composition (basic and acidic residues); it reads SGDRSYQEKVTE. A compositionally biased stretch (polar residues) spans 302-317; sequence MSGSTAEPNRNVNQMP.

The protein localises to the membrane. This is an uncharacterized protein from Saccharomyces cerevisiae (strain ATCC 204508 / S288c) (Baker's yeast).